Reading from the N-terminus, the 38-residue chain is Photosystem II reaction center protein L (38 aa).

The helical transmembrane segment at 17-37 (SLFWGLLLIFVLAVLFSSYFF) threads the bilayer.

Belongs to the PsbL family. PSII is composed of 1 copy each of membrane proteins PsbA, PsbB, PsbC, PsbD, PsbE, PsbF, PsbH, PsbI, PsbJ, PsbK, PsbL, PsbM, PsbT, PsbX, PsbY, PsbZ, Psb30/Ycf12, at least 3 peripheral proteins of the oxygen-evolving complex and a large number of cofactors. It forms dimeric complexes.

The protein localises to the plastid. Its subcellular location is the chloroplast thylakoid membrane. Functionally, one of the components of the core complex of photosystem II (PSII). PSII is a light-driven water:plastoquinone oxidoreductase that uses light energy to abstract electrons from H(2)O, generating O(2) and a proton gradient subsequently used for ATP formation. It consists of a core antenna complex that captures photons, and an electron transfer chain that converts photonic excitation into a charge separation. This subunit is found at the monomer-monomer interface and is required for correct PSII assembly and/or dimerization. In Porphyra purpurea (Red seaweed), this protein is Photosystem II reaction center protein L.